The chain runs to 134 residues: uncharacterized protein (134 aa).

Helical transmembrane passes span 8-28 (FTSL…TVMY), 54-74 (GFQA…TFLL), and 113-133 (LACF…RLVD).

The protein belongs to the cornichon family.

It is found in the endoplasmic reticulum membrane. This is an uncharacterized protein from Schizosaccharomyces pombe (strain 972 / ATCC 24843) (Fission yeast).